Consider the following 341-residue polypeptide: Protein pelota homolog (341 aa).

Belongs to the eukaryotic release factor 1 family. Pelota subfamily. Monomer. A divalent metal cation is required as a cofactor.

The protein resides in the cytoplasm. In terms of biological role, may function in recognizing stalled ribosomes, interact with stem-loop structures in stalled mRNA molecules, and effect endonucleolytic cleavage of the mRNA. May play a role in the release non-functional ribosomes and degradation of damaged mRNAs. Has endoribonuclease activity. The protein is Protein pelota homolog of Metallosphaera sedula (strain ATCC 51363 / DSM 5348 / JCM 9185 / NBRC 15509 / TH2).